The chain runs to 721 residues: 1,4-alpha-glucan branching enzyme GlgB (721 aa).

Asp400 serves as the catalytic Nucleophile. Catalysis depends on Glu453, which acts as the Proton donor.

The protein belongs to the glycosyl hydrolase 13 family. GlgB subfamily. As to quaternary structure, monomer.

It catalyses the reaction Transfers a segment of a (1-&gt;4)-alpha-D-glucan chain to a primary hydroxy group in a similar glucan chain.. The protein operates within glycan biosynthesis; glycogen biosynthesis. Catalyzes the formation of the alpha-1,6-glucosidic linkages in glycogen by scission of a 1,4-alpha-linked oligosaccharide from growing alpha-1,4-glucan chains and the subsequent attachment of the oligosaccharide to the alpha-1,6 position. The protein is 1,4-alpha-glucan branching enzyme GlgB of Chlamydia felis (strain Fe/C-56) (Chlamydophila felis).